Consider the following 1132-residue polypeptide: DNA-directed RNA polymerase I subunit RPA2 (1132 aa).

Residues Cys-1067–Cys-1098 form a C4-type zinc finger.

Belongs to the RNA polymerase beta chain family. Component of the RNA polymerase I (Pol I) complex consisting of at least 13 subunits.

The protein resides in the nucleus. The protein localises to the nucleolus. Its subcellular location is the chromosome. It carries out the reaction RNA(n) + a ribonucleoside 5'-triphosphate = RNA(n+1) + diphosphate. In terms of biological role, DNA-dependent RNA polymerase catalyzes the transcription of DNA into RNA using the four ribonucleoside triphosphates as substrates. Second largest core component of RNA polymerase I which synthesizes ribosomal RNA precursors. Proposed to contribute to the polymerase catalytic activity and forms the polymerase active center together with the largest subunit. Pol I is composed of mobile elements and RPA2 is part of the core element with the central large cleft and probably a clamp element that moves to open and close the cleft. The protein is DNA-directed RNA polymerase I subunit RPA2 (polr1b) of Danio rerio (Zebrafish).